The sequence spans 666 residues: Fructose-1,6-bisphosphatase class 3 (666 aa).

The protein belongs to the FBPase class 3 family. The cofactor is Mn(2+).

It catalyses the reaction beta-D-fructose 1,6-bisphosphate + H2O = beta-D-fructose 6-phosphate + phosphate. Its pathway is carbohydrate biosynthesis; gluconeogenesis. The chain is Fructose-1,6-bisphosphatase class 3 from Parabacteroides distasonis (strain ATCC 8503 / DSM 20701 / CIP 104284 / JCM 5825 / NCTC 11152).